Reading from the N-terminus, the 560-residue chain is Protein tweety homolog 3 (560 aa).

Residues 1-43 (MAAVVNYSPPWWVNLFHRLPHFNLQFQQTSSDFRPDDSDYQKA) lie on the Extracellular side of the membrane. The chain crosses the membrane as a helical span at residues 44–64 (VLLLGAAALVCLALDLLFLLF). Residues 65-87 (YSFWLCCCRRKNHDSPNADCCCT) are Cytoplasmic-facing. A helical transmembrane segment spans residues 88 to 108 (AWCVIIATLVCSAGIAVGFYG). The Extracellular portion of the chain corresponds to 109–212 (NGETCDGVTR…TEQYDWYRWL (104 aa)). Ca(2+)-binding residues include E111 and D114. N127 and N145 each carry an N-linked (GlcNAc...) asparagine glycan. Residues 213–233 (GYLGLLLFDVIICLLVLVGLI) traverse the membrane as a helical segment. Topologically, residues 234–238 (RNSRS) are cytoplasmic. The chain crosses the membrane as a helical span at residues 239 to 259 (ILIGVCFLGVLTLVISWASLG). At 260–387 (LEFSFAVGAS…LTGLCYDGVE (128 aa)) the chain is on the extracellular side. Cystine bridges form between C272–C382 and C300–C367. A glycan (N-linked (GlcNAc...) asparagine) is linked at N352. The helical transmembrane segment at 388 to 408 (GLIYLVLFSFVTALMFSSIVC) threads the bilayer. The Cytoplasmic segment spans residues 409–560 (SVPHTWQSKR…AIHRPHSAIH (152 aa)). 2 disordered regions span residues 415–435 (QSKR…GSRA) and 486–560 (TPRC…SAIH). Polar residues predominate over residues 539-549 (TSRSAPNSRPN).

It belongs to the tweety family. Homotetramer; disulfide-linked. Forms cis-homodimers in the presence of Ca(2+).

The protein localises to the cell membrane. The enzyme catalyses chloride(in) = chloride(out). It catalyses the reaction L-glutamate(out) = L-glutamate(in). May act as a calcium-independent, swelling-dependent volume-regulated anion channel (VRAC-swell) which plays a pivotal role in the process of regulatory volume decrease (RVD) in the brain through the efflux of anions like chloride and organic osmolytes like glutamate. Probable large-conductance Ca(2+)-activated chloride channel. This Danio rerio (Zebrafish) protein is Protein tweety homolog 3 (ttyh3b).